Reading from the N-terminus, the 326-residue chain is Polycomb complex protein BMI-1 (326 aa).

The segment at 18 to 57 (CVLCGGYFIDATTIIECLHSFCKTCIVRYLETSKYCPICD) adopts an RING-type zinc-finger fold. The short motif at 81–95 (KLVPGLFKNEMKRRR) is the Nuclear localization signal element. The segment at 162 to 182 (RYLRCPAAMTVMHLRKFLRSK) is interaction with PHC2. The interaction with E4F1 stretch occupies residues 164–228 (LRCPAAMTVM…GPLPLKYRVR (65 aa)). The disordered stretch occupies residues 236–326 (ISHQRDGLTN…VNGSSATSSG (91 aa)). A compositionally biased stretch (low complexity) spans 266 to 278 (PSTSSCLPSPSTP). Polar residues predominate over residues 279 to 309 (VQSPHPQFPHISSTMNGTSNSPSGNHQSSFA). Residues 315–326 (SSVNGSSATSSG) show a composition bias toward low complexity.

In terms of assembly, component of a PRC1-like complex. Identified in a PRC1-like HPRC-H complex with CBX2, CBX4, CBX8, PHC1, PHC2, PHC3 RING1 and RNF2. Interacts with RNF2/RING2. Interacts with RING1. Part of a complex that contains RNF2, UB2D3 and BMI1, where RNF2 and BMI1 form a tight heterodimer, and UB2D3 interacts only with RNF2. The complex composed of RNF2, UB2D3 and BMI1 binds nucleosomes, and has activity only with nucleosomal histone H2A. Interacts with CBX7 and CBX8. Interacts with SPOP. Part of a complex consisting of BMI1, CUL3 and SPOP. Interacts with E4F1. Interacts with PHC2. Interacts with zinc finger protein ZNF277. May be part of a complex including at least ZNF277, BMI1 and RNF2/RING2. Post-translationally, monoubiquitinated. May be polyubiquitinated; which does not lead to proteasomal degradation.

Its subcellular location is the nucleus. It is found in the cytoplasm. Its function is as follows. Component of a Polycomb group (PcG) multiprotein PRC1-like complex, a complex class required to maintain the transcriptionally repressive state of many genes, including Hox genes, throughout development. PcG PRC1 complex acts via chromatin remodeling and modification of histones; it mediates monoubiquitination of histone H2A 'Lys-119', rendering chromatin heritably changed in its expressibility. The complex composed of RNF2, UB2D3 and BMI1 binds nucleosomes, and has activity only with nucleosomal histone H2A. In the PRC1-like complex, regulates the E3 ubiquitin-protein ligase activity of RNF2/RING2. This Homo sapiens (Human) protein is Polycomb complex protein BMI-1 (BMI1).